A 333-amino-acid polypeptide reads, in one-letter code: Adenosine deaminase (333 aa).

Zn(2+) is bound by residues His-12 and His-14. Positions 14, 16, and 170 each coordinate substrate. His-197 provides a ligand contact to Zn(2+). Glu-200 functions as the Proton donor in the catalytic mechanism. Asp-278 is a Zn(2+) binding site. Substrate is bound at residue Asp-279.

The protein belongs to the metallo-dependent hydrolases superfamily. Adenosine and AMP deaminases family. Adenosine deaminase subfamily. Requires Zn(2+) as cofactor.

It catalyses the reaction adenosine + H2O + H(+) = inosine + NH4(+). The catalysed reaction is 2'-deoxyadenosine + H2O + H(+) = 2'-deoxyinosine + NH4(+). Catalyzes the hydrolytic deamination of adenosine and 2-deoxyadenosine. The protein is Adenosine deaminase of Salmonella typhi.